Reading from the N-terminus, the 1234-residue chain is DNA-directed RNA polymerase subunit beta (1234 aa).

This sequence belongs to the RNA polymerase beta chain family. As to quaternary structure, the RNAP catalytic core consists of 2 alpha, 1 beta, 1 beta' and 1 omega subunit. When a sigma factor is associated with the core the holoenzyme is formed, which can initiate transcription.

It carries out the reaction RNA(n) + a ribonucleoside 5'-triphosphate = RNA(n+1) + diphosphate. Functionally, DNA-dependent RNA polymerase catalyzes the transcription of DNA into RNA using the four ribonucleoside triphosphates as substrates. The chain is DNA-directed RNA polymerase subunit beta from Clostridium perfringens (strain ATCC 13124 / DSM 756 / JCM 1290 / NCIMB 6125 / NCTC 8237 / Type A).